We begin with the raw amino-acid sequence, 429 residues long: Glutamate-1-semialdehyde 2,1-aminomutase 2 (429 aa).

K268 bears the N6-(pyridoxal phosphate)lysine mark.

It belongs to the class-III pyridoxal-phosphate-dependent aminotransferase family. HemL subfamily. Homodimer. Pyridoxal 5'-phosphate serves as cofactor.

It is found in the cytoplasm. It catalyses the reaction (S)-4-amino-5-oxopentanoate = 5-aminolevulinate. Its pathway is porphyrin-containing compound metabolism; protoporphyrin-IX biosynthesis; 5-aminolevulinate from L-glutamyl-tRNA(Glu): step 2/2. This is Glutamate-1-semialdehyde 2,1-aminomutase 2 from Halalkalibacterium halodurans (strain ATCC BAA-125 / DSM 18197 / FERM 7344 / JCM 9153 / C-125) (Bacillus halodurans).